The chain runs to 1273 residues: Homeobox protein cut-like ceh-44 (1273 aa).

2 coiled-coil regions span residues 101-407 (LLKG…DGFK) and 440-468 (RQKN…KFED). DNA-binding regions (CUT) lie at residues 591–681 (NVQA…LSPR), 832–919 (QAQY…KQPK), and 978–1065 (IDES…KEES). Positions 1069–1100 (VKAKIESVPAPREAPRPVKRKHSSDTDDYDLN) are disordered. Positions 1103 to 1162 (KPIQRTVITDYQKDTLRFVFVNEQHPSNELCEQISLKLDMSLRTVQNWFHNHRTRSKARE) form a DNA-binding region, homeobox.

The protein belongs to the CUT homeobox family.

It is found in the nucleus. Its function is as follows. Probable DNA-binding regulatory protein involved in cell-fate specification. In Caenorhabditis elegans, this protein is Homeobox protein cut-like ceh-44.